The following is a 150-amino-acid chain: Large ribosomal subunit protein bL9 (150 aa).

It belongs to the bacterial ribosomal protein bL9 family.

Functionally, binds to the 23S rRNA. The chain is Large ribosomal subunit protein bL9 from Variovorax paradoxus (strain S110).